Reading from the N-terminus, the 318-residue chain is N-acyl-aromatic-L-amino acid amidohydrolase (carboxylate-forming) (318 aa).

The hydrolytic domain stretch occupies residues 1 to 210 (MSSLPGSREP…ILDFIELFNQ (210 aa)). 2 residues coordinate Zn(2+): His-21 and Glu-24. Residues Arg-63 and 70–71 (NR) contribute to the substrate site. His-116 is a binding site for Zn(2+). Positions 177 and 287 each coordinate substrate. Residues 211–318 (GMDLPAFEMD…RLTPRSTQTP (108 aa)) form a shielding domain region. Thr-317 carries the post-translational modification Phosphothreonine.

It belongs to the AspA/AstE family. Aspartoacylase subfamily. In terms of assembly, exists as a mixture of homodimers and homotetramer, both catalytically active. It depends on Zn(2+) as a cofactor. As to expression, expressed predominantly in kidney and to a lesser extent in liver. Weakly expressed in heart, small intestine, brain, lung, testis, and stomach.

Its subcellular location is the apical cell membrane. It localises to the cytoplasm. The catalysed reaction is an N-acyl-aromatic L-alpha-amino acid + H2O = an aromatic L-alpha-amino acid + a carboxylate. It carries out the reaction an N-acetyl-L-cysteine-S-conjugate + H2O = an S-substituted L-cysteine + acetate. In terms of biological role, plays an important role in deacetylating mercapturic acids in kidney proximal tubules. Also acts on N-acetyl-aromatic amino acids. This Mus musculus (Mouse) protein is N-acyl-aromatic-L-amino acid amidohydrolase (carboxylate-forming) (Acy3).